We begin with the raw amino-acid sequence, 78 residues long: D-alanyl carrier protein (78 aa).

Positions 1–78 (MEFREQVLDL…KIVEALEELR (78 aa)) constitute a Carrier domain. Ser-36 carries the O-(pantetheine 4'-phosphoryl)serine modification.

This sequence belongs to the DltC family. In terms of processing, 4'-phosphopantetheine is transferred from CoA to a specific serine of apo-DCP.

The protein localises to the cytoplasm. The protein operates within cell wall biogenesis; lipoteichoic acid biosynthesis. Functionally, carrier protein involved in the D-alanylation of lipoteichoic acid (LTA). The loading of thioester-linked D-alanine onto DltC is catalyzed by D-alanine--D-alanyl carrier protein ligase DltA. The DltC-carried D-alanyl group is further transferred to cell membrane phosphatidylglycerol (PG) by forming an ester bond, probably catalyzed by DltD. D-alanylation of LTA plays an important role in modulating the properties of the cell wall in Gram-positive bacteria, influencing the net charge of the cell wall. In Staphylococcus epidermidis (strain ATCC 35984 / DSM 28319 / BCRC 17069 / CCUG 31568 / BM 3577 / RP62A), this protein is D-alanyl carrier protein.